The chain runs to 328 residues: MLLPACLRRCARLLFWIPVLVVIVVVMWSYYAYVVHFCWILLSSATQRVVFLCLFHLCFGMFSWSFWKAVSTPPSSPSVEFQFSTSDSLLYELERDDVAKSPILLEISQKLPVHTRTATGAIRFCHHCQLIKPDRCHHCSVCQTCVLKMDHHCLWLNNCMGFSNYKFFMLFLLYSLLYCLLIVSTVTPTVIQLWRGRLFDSCVKLHVLFLTLVSAIFAITLCFLLIFHIWLLTSNKTTLEWLSVPFFANGPGSKAFDVGVQANFLQVFGKKKRLWLFPVFSSEGDGHSFPLSCQMSSHGPPVMNGHERCATLRTVASPKEAAVTIAVD.

The Cytoplasmic segment spans residues 1–14 (MLLPACLRRCARLL). A helical transmembrane segment spans residues 15–35 (FWIPVLVVIVVVMWSYYAYVV). At 36 to 48 (HFCWILLSSATQR) the chain is on the lumenal side. The chain crosses the membrane as a helical span at residues 49-69 (VVFLCLFHLCFGMFSWSFWKA). Topologically, residues 70–166 (VSTPPSSPSV…NNCMGFSNYK (97 aa)) are cytoplasmic. The region spanning 123–173 (RFCHHCQLIKPDRCHHCSVCQTCVLKMDHHCLWLNNCMGFSNYKFFMLFLL) is the DHHC domain. Residues cysteine 125 and cysteine 128 each contribute to the Zn(2+) site. Lysine 132 is a substrate binding site. Zn(2+)-binding residues include histidine 138, cysteine 139, cysteine 142, cysteine 145, and histidine 152. The S-palmitoyl cysteine intermediate role is filled by cysteine 153. Cysteine 159 lines the Zn(2+) pocket. Residues 167–187 (FFMLFLLYSLLYCLLIVSTVT) traverse the membrane as a helical segment. Topologically, residues 188-206 (PTVIQLWRGRLFDSCVKLH) are lumenal. A helical membrane pass occupies residues 207 to 227 (VLFLTLVSAIFAITLCFLLIF). At 228–328 (HIWLLTSNKT…KEAAVTIAVD (101 aa)) the chain is on the cytoplasmic side.

This sequence belongs to the DHHC palmitoyltransferase family. Post-translationally, autopalmitoylated (in vitro).

The protein resides in the golgi apparatus membrane. It localises to the postsynaptic density. The enzyme catalyses L-cysteinyl-[protein] + hexadecanoyl-CoA = S-hexadecanoyl-L-cysteinyl-[protein] + CoA. It carries out the reaction L-cysteinyl-[protein] + tetradecanoyl-CoA = S-tetradecanoyl-L-cysteinyl-[protein] + CoA. The catalysed reaction is L-cysteinyl-[protein] + octadecanoyl-CoA = S-octadecanoyl-L-cysteinyl-[protein] + CoA. In terms of biological role, palmitoyltransferase that catalyzes the addition of palmitate onto various protein substrates. Has no stringent fatty acid selectivity and in addition to palmitate can also transfer onto target proteins myristate from tetradecanoyl-CoA and stearate from octadecanoyl-CoA. May thereby regulate target proteins association and localization to membranes. In Danio rerio (Zebrafish), this protein is Palmitoyltransferase ZDHHC15A (zdhhc15a).